Reading from the N-terminus, the 164-residue chain is MKEFLAVGEIINTHGIKGEVKVYPLTDDMKRFKKLKEVFIDGEGRKILSCKLQPNNVVLKIEGIDSIEEANKYRKKLLEIKRENSVKLPKGSYFIADLIECRVIDENGREIGQISDVIKTGSNDVYEVKGKSEVLVPAIKDIVTNIDIENKTVTIKPLEIWQCE.

The 72-residue stretch at 90–161 (KGSYFIADLI…TVTIKPLEIW (72 aa)) folds into the PRC barrel domain.

The protein belongs to the RimM family. As to quaternary structure, binds ribosomal protein uS19.

The protein localises to the cytoplasm. Functionally, an accessory protein needed during the final step in the assembly of 30S ribosomal subunit, possibly for assembly of the head region. Essential for efficient processing of 16S rRNA. May be needed both before and after RbfA during the maturation of 16S rRNA. It has affinity for free ribosomal 30S subunits but not for 70S ribosomes. The polypeptide is Ribosome maturation factor RimM (Clostridium botulinum (strain Langeland / NCTC 10281 / Type F)).